A 270-amino-acid polypeptide reads, in one-letter code: tRNA (guanine-N(1)-)-methyltransferase (270 aa).

S-adenosyl-L-methionine-binding positions include Gly119 and 139 to 144 (IGDYVI).

The protein belongs to the RNA methyltransferase TrmD family. In terms of assembly, homodimer.

It is found in the cytoplasm. It carries out the reaction guanosine(37) in tRNA + S-adenosyl-L-methionine = N(1)-methylguanosine(37) in tRNA + S-adenosyl-L-homocysteine + H(+). In terms of biological role, specifically methylates guanosine-37 in various tRNAs. The chain is tRNA (guanine-N(1)-)-methyltransferase from Nitrosomonas europaea (strain ATCC 19718 / CIP 103999 / KCTC 2705 / NBRC 14298).